The primary structure comprises 85 residues: Neurtoxin 10 (85 aa).

The first 23 residues, 1–23 (MKFCVAVSLLIIASMAGVISVSG), serve as a signal peptide directing secretion. Positions 24 to 85 (YDVYPRDYAE…NFLSVIWKHC (62 aa)) constitute an LCN-type CS-alpha/beta domain. Intrachain disulfides connect C38–C60, C46–C65, and C50–C67.

Belongs to the long (3 C-C) scorpion toxin superfamily. In terms of tissue distribution, expressed by the venom gland.

Its subcellular location is the secreted. This Lychas mucronatus (Chinese swimming scorpion) protein is Neurtoxin 10.